Reading from the N-terminus, the 264-residue chain is Cyclin-P1-1 (264 aa).

The interval 1–25 is disordered; the sequence is MDAAAAAGGEMSRQKATASAPPPPE.

Belongs to the cyclin family. Cyclin U/P subfamily.

The protein is Cyclin-P1-1 (CYCP1-1) of Oryza sativa subsp. japonica (Rice).